Consider the following 891-residue polypeptide: Protein SEY1 homolog (891 aa).

The Cytoplasmic portion of the chain corresponds to methionine 1–arginine 754. The GB1/RHD3-type G domain occupies glycine 52–histidine 318. Glycine 62 to serine 69 contacts GTP. A helical transmembrane segment spans residues leucine 755 to leucine 775. Residues threonine 776–proline 778 are Lumenal-facing. Residues alanine 779–glutamine 799 traverse the membrane as a helical segment. The Cytoplasmic segment spans residues tryptophan 800–aspartate 891. Positions serine 863–alanine 880 are enriched in polar residues. The interval serine 863–aspartate 891 is disordered. The span at methionine 882 to aspartate 891 shows a compositional bias: basic residues.

This sequence belongs to the TRAFAC class dynamin-like GTPase superfamily. GB1/RHD3 GTPase family. RHD3 subfamily.

The protein localises to the endoplasmic reticulum membrane. Its function is as follows. Probable GTP-binding protein that may be involved in cell development. This Leishmania braziliensis protein is Protein SEY1 homolog.